The sequence spans 402 residues: Arginine deiminase (402 aa).

Residue C391 is the Amidino-cysteine intermediate of the active site.

It belongs to the arginine deiminase family.

The protein resides in the cytoplasm. It carries out the reaction L-arginine + H2O = L-citrulline + NH4(+). It participates in amino-acid degradation; L-arginine degradation via ADI pathway; carbamoyl phosphate from L-arginine: step 1/2. In Mycobacterium marinum (strain ATCC BAA-535 / M), this protein is Arginine deiminase.